A 325-amino-acid polypeptide reads, in one-letter code: Olfactory receptor 10AC1 (325 aa).

Residues 1 to 26 (MDSPSNATVPCGFLLQGFSEFPHLRP) lie on the Extracellular side of the membrane. N-linked (GlcNAc...) asparagine glycosylation occurs at Asn-6. The helical transmembrane segment at 27 to 47 (VLFLLLLGVHLATLGGNLLIL) threads the bilayer. Residues 48–57 (VAVASMPSRQ) lie on the Cytoplasmic side of the membrane. A helical membrane pass occupies residues 58 to 78 (PMLLFLCQLSAIELCYTLVVV). Over 79–101 (PRSLVDLSTPGHRRGSPISFLSC) the chain is Extracellular. A helical membrane pass occupies residues 102–122 (AFQMQMFVALGGAECFLLAAM). At 123–147 (AYDRYVAICHPLRYAAVVTPGLCAR) the chain is on the cytoplasmic side. Residues 148–168 (LALACCLRGLAVSVGLTVAIF) form a helical membrane-spanning segment. Residues 169–171 (HLP) lie on the Extracellular side of the membrane. A helical transmembrane segment spans residues 172-192 (FCGSRLLLHFFCDITALLHLA). Residues 193–200 (CTRSYADE) are Cytoplasmic-facing. A helical membrane pass occupies residues 201–221 (LPLLGACLVLLLLPSVLILAS). Residues 222-243 (YGAIAAALRRLRCPKGRGKAAS) are Extracellular-facing. A helical transmembrane segment spans residues 244–264 (TCALHLAVTFLHYGCATFMYV). The Cytoplasmic segment spans residues 265–325 (RPRASYSPRL…QAPGGDLREL (61 aa)).

This sequence belongs to the G-protein coupled receptor 1 family.

It localises to the cell membrane. In terms of biological role, odorant receptor. In Homo sapiens (Human), this protein is Olfactory receptor 10AC1 (OR10AC1).